A 624-amino-acid chain; its full sequence is Probable potassium transport system protein Kup 1 (624 aa).

12 helical membrane passes run 10–30, 48–68, 94–114, 133–153, 159–179, 210–230, 242–262, 270–290, 331–351, 363–383, 388–408, and 413–433; these read LALGALGVVFGDIGTSPLYAL, LSLIFWSLIIIVSFKYLMIIF, PLFYIVAIFGAGLLLGDGMLT, LYPYVLPIASVILVLLFSLQA, IGYLFGPLILIWFITIAILGI, FLLGGIFLVVTGGEALFADIG, FFIALPCLLLNYFGQGANLIV, PFFMIAPPWFYLPLIIIATVA, IYVPQINFILFIGTMAFCLAF, IAVNLEMLLVDAMVAYAAVSI, TFNVIFLFGLFLLIDLAFLGA, and FITGGWVPIVLAFFIAFIMYS.

This sequence belongs to the HAK/KUP transporter (TC 2.A.72) family.

It is found in the cell inner membrane. It carries out the reaction K(+)(in) + H(+)(in) = K(+)(out) + H(+)(out). In terms of biological role, transport of potassium into the cell. Likely operates as a K(+):H(+) symporter. In Legionella pneumophila subsp. pneumophila (strain Philadelphia 1 / ATCC 33152 / DSM 7513), this protein is Probable potassium transport system protein Kup 1.